The primary structure comprises 160 residues: Transcription antitermination protein NusB (160 aa).

This sequence belongs to the NusB family.

Involved in transcription antitermination. Required for transcription of ribosomal RNA (rRNA) genes. Binds specifically to the boxA antiterminator sequence of the ribosomal RNA (rrn) operons. This chain is Transcription antitermination protein NusB, found in Chlamydia pneumoniae (Chlamydophila pneumoniae).